The following is a 356-amino-acid chain: Torsin-like protein (356 aa).

The first 18 residues, 1 to 18 (MKLDYVLLLLFHLCFVNT), serve as a signal peptide directing secretion. Residue 110 to 117 (GYTGSGKN) participates in ATP binding. N-linked (GlcNAc...) asparagine glycosylation is found at asparagine 125 and asparagine 250.

This sequence belongs to the ClpA/ClpB family. Torsin subfamily.

It is found in the endoplasmic reticulum lumen. In terms of biological role, may serve as a molecular chaperone assisting in the proper folding of secreted and/or membrane proteins. This Caenorhabditis elegans protein is Torsin-like protein (ooc-5).